The chain runs to 606 residues: Probable potassium transport system protein Kup (606 aa).

12 helical membrane passes run 18-38, 46-66, 97-117, 138-158, 166-186, 212-232, 247-267, 287-307, 339-359, 368-388, 395-415, and 418-438; these read GLVF…VFAL, VFGI…AEYA, LTFV…DGVI, GLHQ…LFVF, VAGA…LSGA, GLAG…GEAL, AWYI…AFII, LYIP…QAMI, IYIG…MLVF, AYGL…ILIL, WKAV…TACL, and LPHG…TILV.

Belongs to the HAK/KUP transporter (TC 2.A.72) family.

It localises to the cell inner membrane. The catalysed reaction is K(+)(in) + H(+)(in) = K(+)(out) + H(+)(out). Transport of potassium into the cell. Likely operates as a K(+):H(+) symporter. The polypeptide is Probable potassium transport system protein Kup (Trichlorobacter lovleyi (strain ATCC BAA-1151 / DSM 17278 / SZ) (Geobacter lovleyi)).